Here is a 198-residue protein sequence, read N- to C-terminus: Recombination protein RecR (198 aa).

Residues 57–72 (CSVCGHITDRDPCYIC) form a C4-type zinc finger. Residues 80–175 (SVVCVVQEPK…KVTRIAHGLP (96 aa)) enclose the Toprim domain.

This sequence belongs to the RecR family.

May play a role in DNA repair. It seems to be involved in an RecBC-independent recombinational process of DNA repair. It may act with RecF and RecO. The protein is Recombination protein RecR of Bacillus anthracis (strain A0248).